Consider the following 552-residue polypeptide: L-ascorbate oxidase (552 aa).

Plastocyanin-like domains follow at residues 1 to 122 (SQIR…LIVD) and 134 to 300 (DGEI…NYLP). Intrachain disulfides connect cysteine 19–cysteine 201, cysteine 81–cysteine 538, and cysteine 180–cysteine 193. Cu cation contacts are provided by histidine 60 and histidine 62. Asparagine 92 carries an N-linked (GlcNAc...) asparagine glycan. 2 residues coordinate Cu cation: histidine 104 and histidine 106. Asparagine 325 and asparagine 440 each carry an N-linked (GlcNAc...) asparagine glycan. In terms of domain architecture, Plastocyanin-like 3 spans 344-523 (NRRIFLLNTQ…HMGMGVVFAE (180 aa)). Residues histidine 445, histidine 448, histidine 450, histidine 506, cysteine 507, histidine 508, histidine 512, and methionine 517 each coordinate Cu cation.

The protein belongs to the multicopper oxidase family. As to quaternary structure, dimer. It depends on Cu cation as a cofactor.

Its subcellular location is the secreted. It catalyses the reaction 4 L-ascorbate + O2 = 4 monodehydro-L-ascorbate radical + 2 H2O. Functionally, may be involved in a redox system involving ascorbic acid. The chain is L-ascorbate oxidase from Cucurbita pepo var. melopepo (Zucchini).